Reading from the N-terminus, the 339-residue chain is Phenylalanine--tRNA ligase alpha subunit (339 aa).

Residue Glu-254 participates in Mg(2+) binding.

It belongs to the class-II aminoacyl-tRNA synthetase family. Phe-tRNA synthetase alpha subunit type 1 subfamily. Tetramer of two alpha and two beta subunits. The cofactor is Mg(2+).

Its subcellular location is the cytoplasm. It catalyses the reaction tRNA(Phe) + L-phenylalanine + ATP = L-phenylalanyl-tRNA(Phe) + AMP + diphosphate + H(+). The sequence is that of Phenylalanine--tRNA ligase alpha subunit from Dictyoglomus turgidum (strain DSM 6724 / Z-1310).